We begin with the raw amino-acid sequence, 381 residues long: Cytochrome b (381 aa).

Helical transmembrane passes span 32 to 52, 76 to 98, 113 to 133, and 179 to 199; these read GGSL…LLAM, MILR…LHVL, VWIS…IGYV, and FYSF…FHIA. Residues His82 and His96 each contribute to the heme b site. His183 and His197 together coordinate heme b. His202 is a binding site for a ubiquinone. The next 4 helical transmembrane spans lie at 225–245, 289–309, 318–338, and 345–365; these read FGAK…ILVF, AMGV…PFIG, ITEW…WLGG, and TSFV…VCQP.

It belongs to the cytochrome b family. As to quaternary structure, the main subunits of complex b-c1 are: cytochrome b, cytochrome c1 and the Rieske protein. It depends on heme b as a cofactor.

It localises to the mitochondrion inner membrane. Functionally, component of the ubiquinol-cytochrome c reductase complex (complex III or cytochrome b-c1 complex) that is part of the mitochondrial respiratory chain. The b-c1 complex mediates electron transfer from ubiquinol to cytochrome c. Contributes to the generation of a proton gradient across the mitochondrial membrane that is then used for ATP synthesis. The sequence is that of Cytochrome b (MT-CYB) from Chlamydomonas reinhardtii (Chlamydomonas smithii).